We begin with the raw amino-acid sequence, 861 residues long: APC membrane recruitment protein 3 (861 aa).

Disordered stretches follow at residues 1-77 (MELK…PKGG), 179-206 (AEGKSLPSPGDPSDPGGRRSKAFLPPGE), 261-289 (PSLELNEGPESPTQAAQGLESKVPRGPLQ), 351-415 (PLCP…FPRD), 514-558 (RGPT…GGAT), 576-644 (GLLA…SQKE), 716-742 (MLEQKQSSSSPSMTTIHGLPYSASTQD), and 786-822 (AHGSQLDSEPRSAPAARWSSQGHHPESLGLTLNSQQE). Positions 362–384 (SKASSIDTGTPKSEQPESVSTSD) are enriched in polar residues. Positions 518 to 530 (PRAPPTPGQPAAP) are enriched in pro residues. A compositionally biased stretch (low complexity) spans 584–595 (ALGGATQGTGTL). Residues 598-609 (DASREEETRGHS) show a composition bias toward basic and acidic residues. Composition is skewed to polar residues over residues 615–629 (SMESAATSTTDTSGK) and 719–730 (QKQSSSSPSMTT).

It belongs to the Amer family.

It is found in the cell membrane. Functionally, regulator of the canonical Wnt signaling pathway. Acts by specifically binding phosphatidylinositol 4,5-bisphosphate (PtdIns(4,5)P2), translocating to the cell membrane. The chain is APC membrane recruitment protein 3 (AMER3) from Homo sapiens (Human).